A 1679-amino-acid chain; its full sequence is AF4/FMR2 family member lilli (1679 aa).

Disordered stretches follow at residues 1–21 (MAQQQQQQLQQQQQHHTSSIN), 55–78 (NYNMEEYERRKRREREKIERQQGI), 124–305 (RSAP…EKDV), 406–539 (LHQL…GAQN), 580–609 (MGAGSGSGGTLSSGGSSSNKTPSPTESNKW), 733–755 (DSGTSASGSSSSSSSSSDSAVGG), 783–1172 (QPTQ…TTPH), and 1197–1319 (TPAQ…LQIG). The segment covering 69 to 78 (REKIERQQGI) has biased composition (basic and acidic residues). 2 stretches are compositionally biased toward low complexity: residues 144–181 (SLGHSPSSASASAAAGPTSASATTALPGQQQQHYQQQQ) and 212–244 (PSSSGMAPPRGPPRSSSSNSNSSSATNNASSGG). Threonine 421 carries the post-translational modification Phosphothreonine. Residues 429-442 (LKTEKNHSLEKQDS) show a composition bias toward basic and acidic residues. Positions 444–455 (LENDLELSESED) are enriched in acidic residues. Phosphoserine occurs at positions 451 and 453. Residues 464 to 484 (SAGNSSNSSESDSSESGSESS) are compositionally biased toward low complexity. Residues 492–501 (HPNHQQHHHQ) show a composition bias toward basic residues. The span at 502 to 532 (LQQQQQQQQQQASMQQQQVLQQQQQHRPQPL) shows a compositional bias: low complexity. The segment covering 582-591 (AGSGSGGTLS) has biased composition (gly residues). Polar residues predominate over residues 598 to 609 (NKTPSPTESNKW). Low complexity predominate over residues 733–752 (DSGTSASGSSSSSSSSSDSA). Residues 783–796 (QPTQSQKAPPSNSV) are compositionally biased toward polar residues. Positions 810-820 (QRQKKPRKKKA) are enriched in basic residues. A phosphoserine mark is found at serine 829 and serine 830. A DNA-binding region (a.T hook) is located at residues 859–871 (KKGRGRPRKQQQS). Low complexity predominate over residues 868–906 (QQQSGGSGNLSSASAGSSSQTKGPTLTAAKKPLAKTPLA). Residues serine 879 and serine 881 each carry the phosphoserine modification. Polar residues predominate over residues 917-927 (SQSSSNGNTPT). Composition is skewed to low complexity over residues 957–973 (SSSAESSSKSSSSSSSS) and 1001–1012 (GSGSSSPSSSGS). Residues 1019–1030 (TRSQVGSGQALA) are compositionally biased toward polar residues. Residues 1042 to 1068 (SQHSQHLSSSECSSSSGGCTAVCSSSS) are compositionally biased toward low complexity. Residues 1073-1090 (EGRREKERERKPKSDKNK) show a composition bias toward basic and acidic residues. Residues 1130 to 1140 (QPPPPQAPPAA) show a composition bias toward pro residues. Positions 1198-1213 (PAQQNGHLTPKDQATN) are enriched in polar residues. 2 stretches are compositionally biased toward basic and acidic residues: residues 1234-1251 (EHPVKPEPELDAGYEAKF) and 1260-1288 (FQLKQERDRDRERERERERERDREREQPP). Serine 1368 carries the phosphoserine modification. Threonine 1370 is modified (phosphothreonine). Low complexity predominate over residues 1569–1589 (GNTPSSISPSNSVGSQGSGSN). A disordered region spans residues 1569 to 1594 (GNTPSSISPSNSVGSQGSGSNTPPGR).

It belongs to the AF4 family.

It localises to the nucleus. Its function is as follows. Has a role in transcriptional regulation. Acts in parallel with the Ras/MAPK and the PI3K/PKB pathways in the control of cell identity and cellular growth. Essential for regulation of the cytoskeleton and cell growth but not for cell proliferation or growth rate. Required specifically for the microtubule-based basal transport of lipid droplets. Plays a partially redundant function downstream of Raf in cell fate specification in the developing eye. Pair-rule protein that regulates embryonic cellularization, gastrulation and segmentation. This is AF4/FMR2 family member lilli from Drosophila erecta (Fruit fly).